Reading from the N-terminus, the 264-residue chain is Methylthioribulose-1-phosphate dehydratase (264 aa).

Cys-110 is a binding site for substrate. Zn(2+)-binding residues include His-128 and His-130. Glu-151 functions as the Proton donor/acceptor in the catalytic mechanism. His-213 provides a ligand contact to Zn(2+).

Belongs to the aldolase class II family. MtnB subfamily. It depends on Zn(2+) as a cofactor.

It is found in the cytoplasm. It catalyses the reaction 5-(methylsulfanyl)-D-ribulose 1-phosphate = 5-methylsulfanyl-2,3-dioxopentyl phosphate + H2O. The protein operates within amino-acid biosynthesis; L-methionine biosynthesis via salvage pathway; L-methionine from S-methyl-5-thio-alpha-D-ribose 1-phosphate: step 2/6. In terms of biological role, catalyzes the dehydration of methylthioribulose-1-phosphate (MTRu-1-P) into 2,3-diketo-5-methylthiopentyl-1-phosphate (DK-MTP-1-P). The chain is Methylthioribulose-1-phosphate dehydratase from Vanderwaltozyma polyspora (strain ATCC 22028 / DSM 70294 / BCRC 21397 / CBS 2163 / NBRC 10782 / NRRL Y-8283 / UCD 57-17) (Kluyveromyces polysporus).